Here is a 231-residue protein sequence, read N- to C-terminus: 7-cyano-7-deazaguanine synthase (231 aa).

17-27 lines the ATP pocket; it reads FSGGMDSFTLL. Residues Cys193, Cys201, Cys204, and Cys207 each contribute to the Zn(2+) site.

The protein belongs to the QueC family. The cofactor is Zn(2+).

The catalysed reaction is 7-carboxy-7-deazaguanine + NH4(+) + ATP = 7-cyano-7-deazaguanine + ADP + phosphate + H2O + H(+). It functions in the pathway purine metabolism; 7-cyano-7-deazaguanine biosynthesis. Catalyzes the ATP-dependent conversion of 7-carboxy-7-deazaguanine (CDG) to 7-cyano-7-deazaguanine (preQ(0)). This chain is 7-cyano-7-deazaguanine synthase, found in Hahella chejuensis (strain KCTC 2396).